An 810-amino-acid polypeptide reads, in one-letter code: Plasminogen (810 aa).

An N-terminal signal peptide occupies residues 1–19 (MEHKEVVLLLLLFLKSGQG). The PAN domain occupies 20–98 (EPLDDYVNTQ…RDVVLFEKKV (79 aa)). 12 disulfides stabilise this stretch: Cys49-Cys73, Cys53-Cys61, Cys103-Cys181, Cys124-Cys164, Cys152-Cys176, Cys185-Cys262, Cys188-Cys316, Cys206-Cys245, Cys234-Cys257, Cys275-Cys352, Cys296-Cys335, and Cys324-Cys347. Kringle domains lie at 103–181 (CKTG…IPEC), 184–262 (ACMH…IPRC), and 275–352 (CLKG…IPSC). The interval 126–145 (KWSSTSPHRPRFSPATHPSE) is disordered. L-lysine contacts are provided by Arg136, Asp158, and Arg172. Thr365 carries an O-linked (GalNAc...) threonine glycan. Intrachain disulfides connect Cys377/Cys454, Cys398/Cys437, Cys426/Cys449, Cys481/Cys560, Cys502/Cys543, Cys531/Cys555, Cys567/Cys685, Cys577/Cys585, and Cys607/Cys623. Kringle domains follow at residues 377–454 (CYHG…LKKC) and 481–560 (CMFG…VPQC). L-lysine-binding residues include Asp432 and Arg445. The region spanning 581–808 (VVGGCVANAH…FVTWIEGVMR (228 aa)) is the Peptidase S1 domain. Residue Ser597 is modified to Phosphoserine. Catalysis depends on charge relay system residues His622 and Asp665. The residue at position 688 (Ser688) is a Phosphoserine. 3 disulfides stabilise this stretch: Cys699–Cys766, Cys729–Cys745, and Cys756–Cys784. Catalysis depends on Ser760, which acts as the Charge relay system.

It belongs to the peptidase S1 family. Plasminogen subfamily. As to quaternary structure, interacts with CSPG4 and AMOT. Interacts (via the Kringle domains) with HRG; the interaction tethers PLG to the cell surface and enhances its activation. Interacts (via Kringle 4 domain) with ADA; the interaction stimulates PLG activation when in complex with DPP4. Angiostatin: Interacts with ATP5F1A; the interaction inhibits most of the angiogenic effects of angiostatin. Post-translationally, in the presence of the inhibitor, the activation involves only cleavage after Arg-580, yielding two chains held together by two disulfide bonds. In the absence of the inhibitor, the activation involves additionally the removal of the activation peptide.

The protein resides in the secreted. It catalyses the reaction Preferential cleavage: Lys-|-Xaa &gt; Arg-|-Xaa, higher selectivity than trypsin. Converts fibrin into soluble products.. Its activity is regulated as follows. Converted into plasmin by plasminogen activators, both plasminogen and its activator being bound to fibrin. Activated with catalytic amounts of streptokinase. Its function is as follows. Plasmin dissolves the fibrin of blood clots and acts as a proteolytic factor in a variety of other processes including embryonic development, tissue remodeling, tumor invasion, and inflammation. In ovulation, weakens the walls of the Graafian follicle. It activates the urokinase-type plasminogen activator, collagenases and several complement zymogens, such as C1, C4 and C5. Cleavage of fibronectin and laminin leads to cell detachment and apoptosis. Also cleaves fibrin, thrombospondin and von Willebrand factor. Its role in tissue remodeling and tumor invasion may be modulated by CSPG4. Binds to cells. This chain is Plasminogen (PLG), found in Pongo abelii (Sumatran orangutan).